Consider the following 591-residue polypeptide: PDZ and LIM domain protein 5 (591 aa).

S2 carries the N-acetylserine modification. S2 carries the post-translational modification Phosphoserine. The 84-residue stretch at 2–85 (SNYSVSLVGP…SLNMTLQRAS (84 aa)) folds into the PDZ domain. An N6-acetyllysine; alternate modification is found at K89. Residue K89 is modified to N6-succinyllysine; alternate. Residue K89 forms a Glycyl lysine isopeptide (Lys-Gly) (interchain with G-Cter in SUMO2); alternate linkage. Phosphoserine is present on residues E102, K105, S111, S134, and S137. Disordered stretches follow at residues 121 to 166 (TNMA…PTPV) and 186 to 398 (SADQ…DQDT). A compositionally biased stretch (polar residues) spans 134–143 (SVSSPKVTSI). The span at 144 to 166 (PSPSSAFTPAHAATSSHASPTPV) shows a compositional bias: low complexity. 2 stretches are compositionally biased toward polar residues: residues 186–195 (SADQCSSPPN) and 205–217 (RQPT…SESA). Phosphoserine is present on residues Q218, S228, and S260. Composition is skewed to basic and acidic residues over residues 258-273 (DASK…DWRP) and 294-304 (HLTESENDNTK). Residues 310–339 (QEPSQQPASSGASPLSASEGPESPGSSRPS) show a composition bias toward low complexity. Phosphoserine occurs at positions 313, 316, and 322. K350 bears the N6-acetyllysine mark. Positions 353 to 385 (GSTSVKSPSWQRPNQAAPSTGRISNNARSSGTG) are enriched in polar residues. Residues S359 and S361 each carry the phosphoserine modification. 3 LIM zinc-binding domains span residues 413-472 (PMCA…FFAP), 472-531 (PECG…LFGT), and 531-591 (TICR…SVNF).

Interacts with various PKC isoforms through the LIM domains. Interacts with actin and alpha-actinin through the PDZ domain. Interacts (via LIM domains) with SIPA1L1/SPAR; this interaction may occur preferentially with isoform 1.

The protein localises to the postsynaptic density. Its subcellular location is the presynapse. It is found in the postsynapse. The protein resides in the cytoplasm. It localises to the cytosol. Its function is as follows. May play an important role in the heart development by scaffolding PKC to the Z-disk region. May play a role in the regulation of cardiomyocyte expansion. Isoforms lacking the LIM domains may negatively modulate the scaffolding activity of isoform 1. Overexpression promotes the development of heart hypertrophy. Contributes to the regulation of dendritic spine morphogenesis in neurons. May be required to restrain postsynaptic growth of excitatory synapses. Isoform 1, but not isoform 2, expression favors spine thinning and elongation. The polypeptide is PDZ and LIM domain protein 5 (Mus musculus (Mouse)).